The following is a 478-amino-acid chain: Major facilitator superfamily domain-containing protein 12 (478 aa).

N-acetylmethionine is present on Met1. Over 1-26 the chain is Cytoplasmic; that stretch reads MVPGSPAAGAGPAPRALSLAARLSYA. Residues 27–47 traverse the membrane as a helical segment; it reads VGHFLNDLCASMWFTYLLLYL. Over 48–56 the chain is Lumenal; the sequence is HSVRAYSSR. Residues 57-77 traverse the membrane as a helical segment; it reads GAGLLLLLGQVADGLCTPLVG. Over 78-97 the chain is Cytoplasmic; it reads YEADRAAGRCARCGPRKAWH. The helical transmembrane segment at 98–118 threads the bilayer; sequence LVGTVCVLLSFPFIFSPCLGC. At 119–124 the chain is on the lumenal side; sequence GAATPE. Residues 125–145 form a helical membrane-spanning segment; the sequence is WAALLYYGPFIVVFQFGWAAT. Residues 146–168 lie on the Cytoplasmic side of the membrane; it reads QIAHLSLIPELVTSDHEKVELTA. A helical transmembrane segment spans residues 169–189; that stretch reads LRYAFTVVANITVFGAAWLLL. The Lumenal segment spans residues 190 to 216; that stretch reads RLQGSAREGPPDEAGDHLGVQDVPVFR. The helical transmembrane segment at 217 to 237 threads the bilayer; it reads TLSLCVVGVGAVFSLLFHLGT. Topologically, residues 238–277 are cytoplasmic; sequence RERRRPPAQEPDERSPLLAPATARPLLLWKHWLREPSFYQ. Residues 278–300 traverse the membrane as a helical segment; the sequence is VGLLYMSTRLIVNLSQTYIAMYL. The Lumenal segment spans residues 301-308; sequence TYSLNLPK. The chain crosses the membrane as a helical span at residues 309-329; sequence KFIATIPLVMYVSGFCSSFLM. The Cytoplasmic portion of the chain corresponds to 330–338; it reads KPVNKCIGR. The chain crosses the membrane as a helical span at residues 339-359; sequence NMTYFVGLLVILAFAAWVVLV. Residues 360–361 are Lumenal-facing; sequence DE. Residues 362 to 382 traverse the membrane as a helical segment; sequence LGMAVYVAAVLLGGGCATILV. Over 383–400 the chain is Cytoplasmic; it reads TSLAMTADLIGPHTHSGA. A helical transmembrane segment spans residues 401–421; that stretch reads FVYGAMSFSDKVANGLAVMVI. The Lumenal segment spans residues 422–436; sequence QSLHPCSLELCCRAC. A helical transmembrane segment spans residues 437–457; the sequence is VGFYHWVMVAVTGGVGVAATL. At 458–478 the chain is on the cytoplasmic side; the sequence is SLCSLLVWPIRLRSWDPGAQP.

Belongs to the major facilitator superfamily.

Its subcellular location is the melanosome membrane. It is found in the lysosome membrane. The enzyme catalyses L-cysteine(in) = L-cysteine(out). Transporter that mediates the import of cysteine into melanosomes, thereby regulating skin/hair pigmentation. In melanosomes, cysteine import is required both for normal levels of cystine, the oxidized dimer of cysteine, and provide cysteine for the production of the cysteinyldopas used in pheomelanin synthesis, thereby regulating skin/hair pigmentation. Also catalyzes import of cysteine into lysosomes in non-pigmented cells, regulating lysosomal cystine and cysteine storage, which is essnetial for redox homeostasis. The protein is Major facilitator superfamily domain-containing protein 12 of Equus caballus (Horse).